A 359-amino-acid polypeptide reads, in one-letter code: Type-1 angiotensin II receptor B (359 aa).

Residues 1 to 25 (MILNSSIEDGIKRIQDDCPKAGRHN) lie on the Extracellular side of the membrane. Asn-4 carries an N-linked (GlcNAc...) asparagine glycan. Positions 15 and 17 each coordinate angiotensin II. Disulfide bonds link Cys-18–Cys-274 and Cys-101–Cys-180. A helical transmembrane segment spans residues 26-55 (YIFVMIPTLYSIIFVVGIFGNSLVVIVIYF). Residues 56–61 (YMKLKT) are Cytoplasmic-facing. Residues 62 to 89 (VASVFLLNLALADLCFLLTLPLWAVYTA) form a helical membrane-spanning segment. Topologically, residues 90–98 (MEYQWPFGN) are extracellular. Residues 99–125 (HLCKIASASVSFNLYASVFLLTCLSID) form a helical membrane-spanning segment. Topologically, residues 126 to 141 (RYLAIVHPMKSRLRRT) are cytoplasmic. The helical transmembrane segment at 142–165 (MLVAKVTCIIIWLMAGLASLPAVI) threads the bilayer. Residues 166–190 (HRNVYFIENTNITVCAFHYESQNST) lie on the Extracellular side of the membrane. Arg-167 contacts angiotensin II. N-linked (GlcNAc...) asparagine glycosylation is present at Asn-176. The angiotensin II site is built by Phe-182, His-183, and Tyr-184. N-linked (GlcNAc...) asparagine glycosylation occurs at Asn-188. A helical transmembrane segment spans residues 191-216 (LPIGLGLTKNILGFVFPFVIILTSYT). Lys-199 is an angiotensin II binding site. Over 217–239 (LIWKALKKAYKIQKNTPRNDDIF) the chain is Cytoplasmic. The helical transmembrane segment at 240 to 268 (RIIMAIVLFFFFSWVPHQIFSFLDVLIQL) threads the bilayer. Residues 269–278 (GVIHDCEIAD) lie on the Extracellular side of the membrane. A helical membrane pass occupies residues 279-304 (VVDTAMPITICIAYFNNCLNPLFYGF). The Cytoplasmic portion of the chain corresponds to 305–359 (LGKKFKRYFLQLLKYIPPKARSHAGLSTKMSTLSYRPSDNMSSSARKSAYCFEVE). Residue Cys-355 is the site of S-palmitoyl cysteine attachment.

The protein belongs to the G-protein coupled receptor 1 family. In terms of assembly, interacts with MAS1. Interacts with ARRB1. Interacts with FLNA (via filamin repeat 21); increases PKA-mediated phosphorylation of FLNA. In terms of processing, C-terminal Ser or Thr residues may be phosphorylated.

The protein localises to the cell membrane. Functionally, receptor for angiotensin II, a vasoconstricting peptide, which acts as a key regulator of blood pressure and sodium retention by the kidney. The activated receptor in turn couples to G-alpha proteins G(q) (GNAQ, GNA11, GNA14 or GNA15) and thus activates phospholipase C and increases the cytosolic Ca(2+) concentrations, which in turn triggers cellular responses such as stimulation of protein kinase C. The chain is Type-1 angiotensin II receptor B (Agtr1b) from Mus musculus (Mouse).